The sequence spans 367 residues: Type II methyltransferase M.CviJI (367 aa).

In terms of domain architecture, SAM-dependent MTase C5-type spans Phe-3–Asp-367. Cys-73 is an active-site residue.

It belongs to the class I-like SAM-binding methyltransferase superfamily. C5-methyltransferase family.

The enzyme catalyses a 2'-deoxycytidine in DNA + S-adenosyl-L-methionine = a 5-methyl-2'-deoxycytidine in DNA + S-adenosyl-L-homocysteine + H(+). A methylase that recognizes the double-stranded sequence 5'-RGCY-3', methylates C-3 on both strands, and protects the DNA from cleavage by the CviJI endonuclease. The sequence is that of Type II methyltransferase M.CviJI from Chlorella (PBCV-IL3A).